Reading from the N-terminus, the 294-residue chain is Indole-3-glycerol phosphate synthase (294 aa).

This sequence belongs to the TrpC family.

It catalyses the reaction 1-(2-carboxyphenylamino)-1-deoxy-D-ribulose 5-phosphate + H(+) = (1S,2R)-1-C-(indol-3-yl)glycerol 3-phosphate + CO2 + H2O. It participates in amino-acid biosynthesis; L-tryptophan biosynthesis; L-tryptophan from chorismate: step 4/5. In Synechococcus sp. (strain WH7803), this protein is Indole-3-glycerol phosphate synthase.